Here is a 390-residue protein sequence, read N- to C-terminus: Na(+)/H(+) antiporter NhaA 2 (390 aa).

A run of 11 helical transmembrane segments spans residues 23 to 43 (IVLI…LAAA), 63 to 83 (LHLW…GLEI), 100 to 120 (LPVL…LAIT), 129 to 149 (GWAI…ALVG), 158 to 178 (LFLL…IALF), 181 to 201 (SGLK…LVLV), 208 to 228 (ALLP…HSGI), 265 to 285 (GFVI…GADF), 293 to 313 (LGIA…SILV), 331 to 351 (LWGI…IAGL), and 362 to 382 (EAKL…LLVL).

Belongs to the NhaA Na(+)/H(+) (TC 2.A.33) antiporter family.

The protein localises to the cell inner membrane. It catalyses the reaction Na(+)(in) + 2 H(+)(out) = Na(+)(out) + 2 H(+)(in). In terms of biological role, na(+)/H(+) antiporter that extrudes sodium in exchange for external protons. The protein is Na(+)/H(+) antiporter NhaA 2 of Novosphingobium aromaticivorans (strain ATCC 700278 / DSM 12444 / CCUG 56034 / CIP 105152 / NBRC 16084 / F199).